The primary structure comprises 290 residues: Nucleoid occlusion protein (290 aa).

Residues 153 to 172 (EALAQRLGKGQSTIANKLRL) constitute a DNA-binding region (H-T-H motif).

This sequence belongs to the ParB family.

The protein resides in the cytoplasm. It is found in the nucleoid. Its function is as follows. Effects nucleoid occlusion by binding relatively nonspecifically to DNA and preventing the assembly of the division machinery in the vicinity of the nucleoid, especially under conditions that disturb the cell cycle. It helps to coordinate cell division and chromosome segregation by preventing the formation of the Z ring through the nucleoid, which would cause chromosome breakage. This Bacillus cereus (strain ATCC 10987 / NRS 248) protein is Nucleoid occlusion protein.